The chain runs to 404 residues: Phosphoglycerate kinase (404 aa).

Residues 22-24, Arg-37, 60-63, Arg-119, and Arg-156 contribute to the substrate site; these read DLN and HLGR. Residues Lys-206, Gly-302, Glu-333, and 359-362 each bind ATP; that span reads GGDS.

This sequence belongs to the phosphoglycerate kinase family. As to quaternary structure, monomer.

The protein localises to the cytoplasm. The catalysed reaction is (2R)-3-phosphoglycerate + ATP = (2R)-3-phospho-glyceroyl phosphate + ADP. The protein operates within carbohydrate degradation; glycolysis; pyruvate from D-glyceraldehyde 3-phosphate: step 2/5. This chain is Phosphoglycerate kinase, found in Clavibacter sepedonicus (Clavibacter michiganensis subsp. sepedonicus).